The primary structure comprises 458 residues: Argininosuccinate lyase (458 aa).

It belongs to the lyase 1 family. Argininosuccinate lyase subfamily.

The protein localises to the cytoplasm. The enzyme catalyses 2-(N(omega)-L-arginino)succinate = fumarate + L-arginine. The protein operates within amino-acid biosynthesis; L-arginine biosynthesis; L-arginine from L-ornithine and carbamoyl phosphate: step 3/3. This Salmonella newport (strain SL254) protein is Argininosuccinate lyase.